Reading from the N-terminus, the 464-residue chain is Secretion-regulating guanine nucleotide exchange factor (464 aa).

RCC1 repeat units follow at residues 15–67 (AVLF…VTDG), 68–119 (GDLF…LTEK), 120–171 (GQVL…TTAT), 172–230 (GSVF…LTDT), 231–283 (GELY…KTET), 284–351 (GKVF…VIRD), and 352–402 (KCCS…LAVC). A disordered region spans residues 422 to 464 (DDTENTESQGAVDRDRLEGETISDLNPDRTRNGGGGCESETVQ). S429 bears the Phosphoserine mark.

In terms of assembly, interacts with SEC5. The interaction occurs only in the presence of magnesium or manganese and is stimulated by dCTP or GTP.

The protein localises to the cytoplasm. It localises to the nucleus. Its function is as follows. Probable guanine nucleotide exchange factor (GEF), which may be involved in the secretion process. In Mus musculus (Mouse), this protein is Secretion-regulating guanine nucleotide exchange factor (Sergef).